A 232-amino-acid chain; its full sequence is Peroxiredoxin (232 aa).

The Thioredoxin domain occupies 6-161; sequence PSIGEKFPEI…ILRLIESLQI (156 aa). Cys48 (cysteine sulfenic acid (-SOH) intermediate) is an active-site residue. Arg124 is a binding site for substrate. Cys203 and Cys209 form a disulfide bridge.

The protein belongs to the peroxiredoxin family. Prx6 subfamily. In terms of assembly, homodecamer. Pentamer of dimers that assemble into a ring structure.

The protein resides in the cytoplasm. The enzyme catalyses a hydroperoxide + [thioredoxin]-dithiol = an alcohol + [thioredoxin]-disulfide + H2O. In terms of biological role, thiol-specific peroxidase that catalyzes the reduction of hydrogen peroxide and organic hydroperoxides to water and alcohols, respectively. Plays a role in cell protection against oxidative stress by detoxifying peroxides. The protein is Peroxiredoxin of Hyperthermus butylicus (strain DSM 5456 / JCM 9403 / PLM1-5).